The primary structure comprises 426 residues: Probable imidazolonepropionase (426 aa).

Tyr159 and His192 together coordinate 4-imidazolone-5-propanoate. Tyr159 is a binding site for N-formimidoyl-L-glutamate. Position 260 (His260) interacts with Fe(3+). His260 lines the Zn(2+) pocket. A 4-imidazolone-5-propanoate-binding site is contributed by Glu263. Position 334 (Asp334) interacts with Fe(3+). Asp334 serves as a coordination point for Zn(2+). Asn336 provides a ligand contact to N-formimidoyl-L-glutamate.

It belongs to the metallo-dependent hydrolases superfamily. HutI family. Zn(2+) is required as a cofactor. Fe(3+) serves as cofactor.

The enzyme catalyses 4-imidazolone-5-propanoate + H2O = N-formimidoyl-L-glutamate. The protein operates within amino-acid degradation; L-histidine degradation into L-glutamate; N-formimidoyl-L-glutamate from L-histidine: step 3/3. This is Probable imidazolonepropionase (AMDHD1) from Bos taurus (Bovine).